Consider the following 1682-residue polypeptide: Merozoite surface protein 1 (1682 aa).

The signal sequence occupies residues 1–19; that stretch reads MKIIFFLCSFLFFIINTQC. Residues 68 to 110 are disordered; it reads AVSTQSAKNPPGATVPSGTASTKGAIRSPGAANPSDDSSDSDA. Residues N233, N462, N528, and N599 are each glycosylated (N-linked (GlcNAc...) asparagine). A disordered region spans residues 696 to 729; sequence SETTEDGGHSTHTLSQSGETEVTEETEETVGHTT. N-linked (GlcNAc...) asparagine glycosylation is found at N785, N881, N901, N947, N1071, and N1178. Residues 870–918 are disordered; the sequence is ITGTSSTSSPGNTTVNTAQSATHSNSQNQQSNASSTNTQNGVAVSSGPA. Low complexity predominate over residues 871–909; sequence TGTSSTSSPGNTTVNTAQSATHSNSQNQQSNASSTNTQN. Disordered regions lie at residues 1212–1241 and 1433–1453; these read TPPQPDVTPSPLSVRVSGSSGSTKEETQIP and KEFPSSPPTTPPSPAKTDEQK. Residues 1227 to 1241 are compositionally biased toward polar residues; it reads VSGSSGSTKEETQIP. The segment covering 1437–1446 has biased composition (pro residues); the sequence is SSPPTTPPSP. An N-linked (GlcNAc...) asparagine glycan is attached at N1569. 2 consecutive EGF-like domains span residues 1573–1613 and 1614–1661; these read HQCV…VENP and NPTC…IFCS. 6 disulfides stabilise this stretch: C1575–C1586, C1580–C1596, C1598–C1609, C1617–C1630, C1624–C1644, and C1646–C1660. A lipid anchor (GPI-anchor amidated serine) is attached at S1661. A propeptide spans 1662–1682 (removed in mature form); that stretch reads SSNFLGISFLLILMLILYSFI.

As to quaternary structure, forms a complex composed of subunits p83, p30, p38, and p42 which remain non-covalently associated; the complex is formed at the merozoite surface prior to egress from host erythrocytes. Forms a complex composed of processed MSP1 subunits, MSP6 subunit p36 and MSP7; the complex is formed at the merozoite surface prior to egress from host erythrocytes. Within the complex, interacts (via subunit p38) with MSP6 subunit p36 and (via subunits p83, p30 and p38) with MSP7 (via subunit p22). Forms a complex composed of MSP1, MSP6, DBLMSP1 and DBLMSP2. Within the complex, interacts (via subunit p38) with DBLMSP1 and DBLMSP2. Forms a complex composed of MSP1, and rhoptry proteins RhopH3, RAP1 and CLAG9/RhopH3. Within the complex, interacts (via subunits p42 and p19) with RhopH3 (via C-terminus). Forms a complex composed of MSP1, MSP6, MSP7, MSP9 and MSP3; within the complex, MSP6 and MSP9 mediate the binding to the host erythrocyte. Interacts (via subunits p19 and p42) with MSP9; the interaction is direct; MSP1 subunits p19 or p42, and MSP9 form a co-ligand complex that interacts with host SLC4A1/Band 3 protein. May interact with PFD6. Interacts with host spectrin. In terms of assembly, interacts with host glycophorin GYPA in a sialic acid-independent manner. Interacts with host proinflammatory cytokine S100P; the interaction blocks S100P inflammatory and chemotactic activities. As to quaternary structure, interacts with host SLC4A1/Band 3 (via 5ABC region) on the host erythrocyte surface in a sialic acid-independent manner. In terms of processing, the p190 precursor is cleaved by SUB1 prior to merozoite egress into 4 subunits p83, p30, p38, and p42 which remain non-covalently associated. SUB1-mediated proteolytic cleavage occurs in an orderly manner; the first cleavage occurs at the p30/p38 site, followed by cleavage at the p83/p30 site, the last cleavage occurs at the p38/p42 site. The order of cleavage is essential for parasite viability. SUB1-mediated processing is essential for merozoite egress. In a second processing step during erythrocyte invasion, p42 is cleaved by SUB2 into p33 and p19; the latter remains attached to the merozoite surface via its GPI-anchor and is endocytosed during the subsequent ring stage.

The protein localises to the cell membrane. It localises to the secreted. It is found in the vacuole membrane. During the asexual blood stage, involved in merozoite egress from host erythrocytes possibly via its interaction with the host cytoskeleton protein spectrin resulting in the destabilization of the host cytoskeleton and thus leading to erythrocyte cell membrane rupture. Involved in the binding to host erythrocytes and is required for host erythrocyte invasion. In terms of biological role, by binding to host proinflammatory cytokine S100P may interfere with host immune responses. Functionally, involved in merozoite invasion of host erythrocytes. May play a role in the biogenesis and/or function of the food vacuole during the intraerythrocytic development. The polypeptide is Merozoite surface protein 1 (Plasmodium falciparum (isolate ro-33 / Ghana)).